The primary structure comprises 291 residues: Phosphoribosylaminoimidazole-succinocarboxamide synthase (291 aa).

The protein belongs to the SAICAR synthetase family.

It carries out the reaction 5-amino-1-(5-phospho-D-ribosyl)imidazole-4-carboxylate + L-aspartate + ATP = (2S)-2-[5-amino-1-(5-phospho-beta-D-ribosyl)imidazole-4-carboxamido]succinate + ADP + phosphate + 2 H(+). Its pathway is purine metabolism; IMP biosynthesis via de novo pathway; 5-amino-1-(5-phospho-D-ribosyl)imidazole-4-carboxamide from 5-amino-1-(5-phospho-D-ribosyl)imidazole-4-carboxylate: step 1/2. In Candida maltosa (Yeast), this protein is Phosphoribosylaminoimidazole-succinocarboxamide synthase (ADE1).